A 123-amino-acid polypeptide reads, in one-letter code: PTS system glucitol/sorbitol-specific EIIA component (123 aa).

A PTS EIIA type-5 domain is found at 1-116; sequence MTVIYQTTIT…PDDIAPGSVL (116 aa). Histidine 43 (tele-phosphohistidine intermediate) is an active-site residue. Phosphohistidine; by HPr is present on histidine 43.

The protein localises to the cytoplasm. The phosphoenolpyruvate-dependent sugar phosphotransferase system (sugar PTS), a major carbohydrate active transport system, catalyzes the phosphorylation of incoming sugar substrates concomitantly with their translocation across the cell membrane. The enzyme II complex composed of SrlA, SrlB and SrlE is involved in glucitol/sorbitol transport. The sequence is that of PTS system glucitol/sorbitol-specific EIIA component (srlB) from Shigella flexneri.